The sequence spans 70 residues: Small, acid-soluble spore protein alpha (70 aa).

The protein belongs to the alpha/beta-type SASP family.

SASP are bound to spore DNA. They are double-stranded DNA-binding proteins that cause DNA to change to an a-like conformation. They protect the DNA backbone from chemical and enzymatic cleavage and are thus involved in dormant spore's high resistance to UV light. The polypeptide is Small, acid-soluble spore protein alpha (Paraclostridium bifermentans (Clostridium bifermentans)).